The sequence spans 338 residues: DNA-directed RNA polymerase subunit alpha (338 aa).

Residues 1–234 (MIERNWNELI…DQLQIFITFE (234 aa)) form an alpha N-terminal domain (alpha-NTD) region. The alpha C-terminal domain (alpha-CTD) stretch occupies residues 250 to 338 (FNPALLKKVD…DLAKKFEDQI (89 aa)).

This sequence belongs to the RNA polymerase alpha chain family. As to quaternary structure, homodimer. The RNAP catalytic core consists of 2 alpha, 1 beta, 1 beta' and 1 omega subunit. When a sigma factor is associated with the core the holoenzyme is formed, which can initiate transcription.

It catalyses the reaction RNA(n) + a ribonucleoside 5'-triphosphate = RNA(n+1) + diphosphate. Its function is as follows. DNA-dependent RNA polymerase catalyzes the transcription of DNA into RNA using the four ribonucleoside triphosphates as substrates. This Caulobacter vibrioides (strain ATCC 19089 / CIP 103742 / CB 15) (Caulobacter crescentus) protein is DNA-directed RNA polymerase subunit alpha.